A 186-amino-acid chain; its full sequence is MAKSTFFVCLNLSLLFSLVTATYYSSLTPTLLGFREEQFTHLHFFFHDVVTGPKPSMVFIAEPNGKAKDALPFGTVVAMDDPLTVGPEQDSKLVGKAQGIYTSISQEEMGLMMVMTMAFTDGDFNGSTISVLGRNMIMSEPVREMAIVGGTGAFRFARGYAQARFYSVDFTKGDAIVEYDVFVNHY.

A signal peptide spans 1–21; sequence MAKSTFFVCLNLSLLFSLVTA. Asn-125 carries N-linked (GlcNAc...) asparagine glycosylation.

This sequence belongs to the plant dirigent protein family. As to quaternary structure, homodimer.

It localises to the secreted. Its subcellular location is the extracellular space. The protein localises to the apoplast. It catalyses the reaction a (4R)-4,2'-dihydroxyisoflavan = a pterocarpan + H2O.. The enzyme catalyses (3R,4R)-7,2'-dihydroxy-4'-methoxyisoflavanol = (-)-medicarpin + H2O. The catalysed reaction is (3R,4R)-3-(6-hydroxy-1,3-benzodioxol-5-yl)-3,4-dihydro-2H-chromene-4,7-diol = (-)-maackiain + H2O. It carries out the reaction (3S,4R)-7,2'-dihydroxy-4'-methoxyisoflavanol = (+)-medicarpin + H2O. It catalyses the reaction (3R,4R)-7,2',4'-trihydroxyisoflavanol = (6aR,11aR)-3,9-dihydroxypterocarpan + H2O. Its function is as follows. Involved in pterocarpan phytoalexin biosynthesis. Catalyzes the last step in the biosynthesis of the phytoalexin medicarpin, and thereby contributes to plant defense reactions. Dirigent proteins impart stereoselectivity on the phenoxy radical-coupling reaction, yielding optically active lignans from two molecules of coniferyl alcohol in the biosynthesis of lignans, flavonolignans, and alkaloids and thus plays a central role in plant secondary metabolism. This Glycine max (Soybean) protein is Pterocarpan synthase 1.